The primary structure comprises 58 residues: Light-harvesting protein B-875 alpha chain (58 aa).

The Cytoplasmic portion of the chain corresponds to 1–15 (MSKFYKIWMIFDPRR). The chain crosses the membrane as a helical span at residues 16 to 36 (VFVAQGVFLFLLAVMIHLILL). H32 serves as a coordination point for a bacteriochlorophyll. Topologically, residues 37–58 (STPSYNWLEISAAKYNRVAVAE) are periplasmic.

It belongs to the antenna complex alpha subunit family. The core complex is formed by different alpha and beta chains, binding bacteriochlorophyll molecules, and arranged most probably in tetrameric structures disposed around the reaction center. The non-pigmented gamma chains may constitute additional components.

The protein localises to the cell inner membrane. Functionally, antenna complexes are light-harvesting systems, which transfer the excitation energy to the reaction centers. This chain is Light-harvesting protein B-875 alpha chain (pufA), found in Cereibacter sphaeroides (strain ATCC 17023 / DSM 158 / JCM 6121 / CCUG 31486 / LMG 2827 / NBRC 12203 / NCIMB 8253 / ATH 2.4.1.) (Rhodobacter sphaeroides).